Consider the following 205-residue polypeptide: Protein-L-isoaspartate O-methyltransferase (205 aa).

Serine 56 is a catalytic residue.

The protein belongs to the methyltransferase superfamily. L-isoaspartyl/D-aspartyl protein methyltransferase family.

It is found in the cytoplasm. It catalyses the reaction [protein]-L-isoaspartate + S-adenosyl-L-methionine = [protein]-L-isoaspartate alpha-methyl ester + S-adenosyl-L-homocysteine. Functionally, catalyzes the methyl esterification of L-isoaspartyl residues in peptides and proteins that result from spontaneous decomposition of normal L-aspartyl and L-asparaginyl residues. It plays a role in the repair and/or degradation of damaged proteins. The chain is Protein-L-isoaspartate O-methyltransferase from Pyrobaculum aerophilum (strain ATCC 51768 / DSM 7523 / JCM 9630 / CIP 104966 / NBRC 100827 / IM2).